The chain runs to 198 residues: Recombination protein RecR (198 aa).

The C4-type zinc-finger motif lies at 56–71; that stretch reads CKVCGNFSEEDECVIC. The Toprim domain occupies 79-174; sequence GVICVVEEPK…RVSKLASGLP (96 aa).

It belongs to the RecR family.

May play a role in DNA repair. It seems to be involved in an RecBC-independent recombinational process of DNA repair. It may act with RecF and RecO. This chain is Recombination protein RecR, found in Tropheryma whipplei (strain TW08/27) (Whipple's bacillus).